The primary structure comprises 413 residues: Gamma-glutamyl phosphate reductase (413 aa).

This sequence belongs to the gamma-glutamyl phosphate reductase family.

Its subcellular location is the cytoplasm. It catalyses the reaction L-glutamate 5-semialdehyde + phosphate + NADP(+) = L-glutamyl 5-phosphate + NADPH + H(+). The protein operates within amino-acid biosynthesis; L-proline biosynthesis; L-glutamate 5-semialdehyde from L-glutamate: step 2/2. Catalyzes the NADPH-dependent reduction of L-glutamate 5-phosphate into L-glutamate 5-semialdehyde and phosphate. The product spontaneously undergoes cyclization to form 1-pyrroline-5-carboxylate. This chain is Gamma-glutamyl phosphate reductase, found in Lactococcus lactis subsp. cremoris (strain SK11).